The chain runs to 381 residues: Subtilisin NAT (381 aa).

The N-terminal stretch at 1–29 (MRSKKLWISLLFALTLIFTMAFSNMSAQA) is a signal peptide. Positions 30–106 (AGKSSTEKKY…VEEDHIAHEY (77 aa)) are excised as a propeptide. The Inhibitor I9 domain maps to 38–103 (KYIVGFKQTM…VAYVEEDHIA (66 aa)). Positions 111 to 380 (PYGISQIKAP…KGLINVQAAA (270 aa)) constitute a Peptidase S8 domain. Asp138 acts as the Charge relay system in catalysis. Asp147 is a binding site for Ca(2+). Catalysis depends on His170, which acts as the Charge relay system. Residues Leu181, Asn183, Ile185, Val187, Ala275, Tyr277, Thr280, and Asp303 each coordinate Ca(2+). Catalysis depends on Ser327, which acts as the Charge relay system.

The protein belongs to the peptidase S8 family. As to quaternary structure, monomer. Requires Ca(2+) as cofactor.

It localises to the secreted. It catalyses the reaction Hydrolysis of proteins with broad specificity for peptide bonds, and a preference for a large uncharged residue in P1. Hydrolyzes peptide amides.. With respect to regulation, inhibited by PMSF (phenylmethylsulfonyl fluoride). Subtilisin is an extracellular alkaline serine protease, it catalyzes the hydrolysis of proteins and peptide amides. Subtilisin NAT also has fibrinolytic activity. This chain is Subtilisin NAT, found in Bacillus subtilis subsp. natto.